The chain runs to 950 residues: Glycine dehydrogenase (decarboxylating) (950 aa).

N6-(pyridoxal phosphate)lysine is present on Lys-698.

It belongs to the GcvP family. The glycine cleavage system is composed of four proteins: P, T, L and H. Pyridoxal 5'-phosphate is required as a cofactor.

The enzyme catalyses N(6)-[(R)-lipoyl]-L-lysyl-[glycine-cleavage complex H protein] + glycine + H(+) = N(6)-[(R)-S(8)-aminomethyldihydrolipoyl]-L-lysyl-[glycine-cleavage complex H protein] + CO2. The glycine cleavage system catalyzes the degradation of glycine. The P protein binds the alpha-amino group of glycine through its pyridoxal phosphate cofactor; CO(2) is released and the remaining methylamine moiety is then transferred to the lipoamide cofactor of the H protein. The polypeptide is Glycine dehydrogenase (decarboxylating) (Neisseria meningitidis serogroup C (strain 053442)).